The sequence spans 635 residues: Peptidyl-prolyl cis-trans isomerase PASTICCINO1 (635 aa).

Residues 1–10 show a composition bias toward polar residues; it reads MAVGDQTEQN. The disordered stretch occupies residues 1–28; sequence MAVGDQTEQNYLPKKKKSETEDDKRRKK. 3 consecutive PPIase FKBP-type domains span residues 51–147, 175–260, and 291–383; these read GDQV…LDFS, PYEV…VHFI, and DSRL…LGFE. TPR repeat units lie at residues 400-433, 449-482, and 483-516; these read ADKI…FNHV, NMLH…KPGH, and VKGL…DKSS. Positions 530–546 are calmodulin-binding; the sequence is KEQEAESKARKQFKGLF. Acidic residues predominate over residues 569 to 586; that stretch reads EVDETKDNDDDETLEEEG. A disordered region spans residues 569-593; sequence EVDETKDNDDDETLEEEGATTVSTE. The chain crosses the membrane as a helical; Anchor for type IV membrane protein span at residues 609 to 629; that stretch reads VMLQIGIQLGVVLIGILIFQF.

This sequence belongs to the FKBP-type PPIase family. In terms of assembly, interacts with calmodulin (CaM). Interacts with RPM1 and NAC089. Interacts with the elongase complex core members KCR1, PAS2 and CER10. Expressed ubiquitously.

It localises to the endoplasmic reticulum membrane. Its subcellular location is the cytoplasm. The protein resides in the nucleus. The catalysed reaction is [protein]-peptidylproline (omega=180) = [protein]-peptidylproline (omega=0). Functionally, PPIases accelerate the folding of proteins. It catalyzes the cis-trans isomerization of proline imidic peptide bonds in oligopeptides. Essential protein regulating cell division, adhesion and elongation throughout the plant development and embryogenesis. Required for the spatial organization of apical meristems. Involved in the hormonal control of cell division and differentiation mediated by cytokinins and auxin. Regulates the function of NAC089 transcription factor by controlling its targeting to the nucleus upon plant cell division. Interacts with enzymes of the fatty acid elongase complex and favors the generation of very-long-chain fatty acids (VLCFAs) required for polar auxin transport and tissue patterning during plant development. The protein is Peptidyl-prolyl cis-trans isomerase PASTICCINO1 (PAS1) of Arabidopsis thaliana (Mouse-ear cress).